The sequence spans 273 residues: NADPH-dependent 7-cyano-7-deazaguanine reductase (273 aa).

81–83 is a substrate binding site; it reads VES. Position 83 to 84 (83 to 84) interacts with NADPH; the sequence is SK. The active-site Thioimide intermediate is cysteine 179. Aspartate 186 acts as the Proton donor in catalysis. 218–219 is a binding site for substrate; the sequence is AE. Position 247-248 (247-248) interacts with NADPH; sequence RG.

The protein belongs to the GTP cyclohydrolase I family. QueF type 2 subfamily. As to quaternary structure, homodimer.

It is found in the cytoplasm. It catalyses the reaction 7-aminomethyl-7-carbaguanine + 2 NADP(+) = 7-cyano-7-deazaguanine + 2 NADPH + 3 H(+). Its pathway is tRNA modification; tRNA-queuosine biosynthesis. In terms of biological role, catalyzes the NADPH-dependent reduction of 7-cyano-7-deazaguanine (preQ0) to 7-aminomethyl-7-deazaguanine (preQ1). The sequence is that of NADPH-dependent 7-cyano-7-deazaguanine reductase from Rickettsia canadensis (strain McKiel).